Consider the following 271-residue polypeptide: 4-hydroxy-tetrahydrodipicolinate reductase (271 aa).

NAD(+)-binding positions include 10 to 15, Glu36, 100 to 102, and 124 to 127; these read GAGGRM, GTT, and SGNM. Catalysis depends on His157, which acts as the Proton donor/acceptor. His158 lines the (S)-2,3,4,5-tetrahydrodipicolinate pocket. Residue Lys161 is the Proton donor of the active site. 167-168 contacts (S)-2,3,4,5-tetrahydrodipicolinate; the sequence is GT.

This sequence belongs to the DapB family.

It is found in the cytoplasm. The enzyme catalyses (S)-2,3,4,5-tetrahydrodipicolinate + NAD(+) + H2O = (2S,4S)-4-hydroxy-2,3,4,5-tetrahydrodipicolinate + NADH + H(+). It carries out the reaction (S)-2,3,4,5-tetrahydrodipicolinate + NADP(+) + H2O = (2S,4S)-4-hydroxy-2,3,4,5-tetrahydrodipicolinate + NADPH + H(+). Its pathway is amino-acid biosynthesis; L-lysine biosynthesis via DAP pathway; (S)-tetrahydrodipicolinate from L-aspartate: step 4/4. In terms of biological role, catalyzes the conversion of 4-hydroxy-tetrahydrodipicolinate (HTPA) to tetrahydrodipicolinate. The polypeptide is 4-hydroxy-tetrahydrodipicolinate reductase (Bradyrhizobium diazoefficiens (strain JCM 10833 / BCRC 13528 / IAM 13628 / NBRC 14792 / USDA 110)).